A 223-amino-acid chain; its full sequence is MNKLIPLPREFFARDTNLVSTELIGKVLYFQGTTAIITETESYIGNDDPACHAARGRTKRTDVMFGPAGFSYVYLIYGMYHCLNFVTEDEGFPAATLIRGVYVISHNDLYTIYTAKVKSQITDEKTQSIIISEDRRSTKFDIPNLEESNLYLNGPGKLCKYLGINTTHNKCDLINNKDFFVSDIGLNLPYSTTKRIGITKGTDKLWRYIVTDNKNALLNINIL.

Belongs to the DNA glycosylase MPG family.

The sequence is that of Putative 3-methyladenine DNA glycosylase from Rickettsia typhi (strain ATCC VR-144 / Wilmington).